We begin with the raw amino-acid sequence, 557 residues long: Dihydroxy-acid dehydratase (557 aa).

Residue Cys-50 coordinates [2Fe-2S] cluster. Asp-82 is a binding site for Mg(2+). Residue Cys-123 participates in [2Fe-2S] cluster binding. Asp-124 and Lys-125 together coordinate Mg(2+). Residue Lys-125 is modified to N6-carboxylysine. Residue Cys-195 participates in [2Fe-2S] cluster binding. Residue Glu-447 coordinates Mg(2+). The active-site Proton acceptor is Ser-473.

This sequence belongs to the IlvD/Edd family. As to quaternary structure, homodimer. Requires [2Fe-2S] cluster as cofactor. Mg(2+) serves as cofactor.

The catalysed reaction is (2R)-2,3-dihydroxy-3-methylbutanoate = 3-methyl-2-oxobutanoate + H2O. It carries out the reaction (2R,3R)-2,3-dihydroxy-3-methylpentanoate = (S)-3-methyl-2-oxopentanoate + H2O. The protein operates within amino-acid biosynthesis; L-isoleucine biosynthesis; L-isoleucine from 2-oxobutanoate: step 3/4. It participates in amino-acid biosynthesis; L-valine biosynthesis; L-valine from pyruvate: step 3/4. Functionally, functions in the biosynthesis of branched-chain amino acids. Catalyzes the dehydration of (2R,3R)-2,3-dihydroxy-3-methylpentanoate (2,3-dihydroxy-3-methylvalerate) into 2-oxo-3-methylpentanoate (2-oxo-3-methylvalerate) and of (2R)-2,3-dihydroxy-3-methylbutanoate (2,3-dihydroxyisovalerate) into 2-oxo-3-methylbutanoate (2-oxoisovalerate), the penultimate precursor to L-isoleucine and L-valine, respectively. The protein is Dihydroxy-acid dehydratase of Burkholderia mallei (strain NCTC 10247).